We begin with the raw amino-acid sequence, 447 residues long: tRNA-2-methylthio-N(6)-dimethylallyladenosine synthase (447 aa).

The region spanning 10–128 is the MTTase N-terminal domain; sequence KLFCISTYGC…FPEYLHRVLQ (119 aa). Residues C19, C55, C89, C165, C169, and C172 each contribute to the [4Fe-4S] cluster site. In terms of domain architecture, Radical SAM core spans 151–382; it reads RKSDVKAFVT…EAINKKVVIK (232 aa). The TRAM domain maps to 384-447; that stretch reads KEYEGKVVEV…PFSLIGEIVE (64 aa).

It belongs to the methylthiotransferase family. MiaB subfamily. In terms of assembly, monomer. It depends on [4Fe-4S] cluster as a cofactor.

It is found in the cytoplasm. It carries out the reaction N(6)-dimethylallyladenosine(37) in tRNA + (sulfur carrier)-SH + AH2 + 2 S-adenosyl-L-methionine = 2-methylsulfanyl-N(6)-dimethylallyladenosine(37) in tRNA + (sulfur carrier)-H + 5'-deoxyadenosine + L-methionine + A + S-adenosyl-L-homocysteine + 2 H(+). In terms of biological role, catalyzes the methylthiolation of N6-(dimethylallyl)adenosine (i(6)A), leading to the formation of 2-methylthio-N6-(dimethylallyl)adenosine (ms(2)i(6)A) at position 37 in tRNAs that read codons beginning with uridine. The chain is tRNA-2-methylthio-N(6)-dimethylallyladenosine synthase from Clostridium perfringens (strain SM101 / Type A).